We begin with the raw amino-acid sequence, 240 residues long: Large ribosomal subunit protein uL3 (240 aa).

Disordered stretches follow at residues 138–158 and 215–240; these read SISH…KTFK and EAPL…SAEG. The residue at position 151 (glutamine 151) is an N5-methylglutamine.

It belongs to the universal ribosomal protein uL3 family. As to quaternary structure, part of the 50S ribosomal subunit. Forms a cluster with proteins L14 and L19. In terms of processing, methylated by PrmB.

Its function is as follows. One of the primary rRNA binding proteins, it binds directly near the 3'-end of the 23S rRNA, where it nucleates assembly of the 50S subunit. This chain is Large ribosomal subunit protein uL3, found in Beijerinckia indica subsp. indica (strain ATCC 9039 / DSM 1715 / NCIMB 8712).